The following is a 130-amino-acid chain: RxLR effector protein PITG_14783 (130 aa).

The signal sequence occupies residues 1–20 (MRLPYVFAATMATLLVSSNA). Residues 27-58 (AMLSSPNEQHQRQLRSHQTPVEDQEPDEERSL) form a disordered region. The RxLR-dEER motif lies at 38-56 (RQLRSHQTPVEDQEPDEER).

Belongs to the RxLR effector family.

It localises to the secreted. The protein resides in the host nucleus. It is found in the host cytoplasm. In terms of biological role, effector that enhances P.infestans colonization of Nicotiana benthamiana leaves. The chain is RxLR effector protein PITG_14783 from Phytophthora infestans (strain T30-4) (Potato late blight agent).